Here is a 267-residue protein sequence, read N- to C-terminus: X-box-binding protein 1 (267 aa).

Residues 1–180 (MVVVAAAPSA…VQAQLSPPQN (180 aa)) lie on the Cytoplasmic side of the membrane. Positions 35-56 (VPGPRAAGSEASGTPQARKRQR) are disordered. S61 carries the post-translational modification Phosphoserine. Residues 63-126 (EEKALRRKLK…HGLVVENQEL (64 aa)) enclose the bZIP domain. The basic motif stretch occupies residues 65-87 (KALRRKLKNRVAAQTARDRKKAR). Residues 69-85 (RKLKNRVAAQTARDRKK) form a nuclear localization signal (NLS) region. Residues 91-126 (LEQQVVDLEEENHKLQLENQLLREKTHGLVVENQEL) are leucine-zipper. Residues 181–198 (IFPWTLTLLPLQILSLIS) form a helical; Signal-anchor for type II membrane protein membrane-spanning segment. Residues 199–267 (FWAFWTSWTL…FVLTMYTPSL (69 aa)) are Lumenal-facing. A necessary for the translational pausing of its own mRNA region spans residues 230–256 (QKDLVPYQPPFLCQWGPHQPSWKPLMN).

It belongs to the bZIP family. As to quaternary structure, isoform 1 interacts with HM13. Isoform 1 interacts with RNF139; the interaction induces ubiquitination and degradation of isoform 1. Isoform 1 interacts (via luminal domain) with DERL1; the interaction obviates the need for ectodomain shedding prior HM13/SPP-mediated XBP1 isoform 1 cleavage. Isoform 1 interacts with isoform 2; the interaction sequesters isoform 2 from the nucleus and enhances isoform 2 degradation in the cytoplasm. Isoform 1 interacts with HDAC3 and AKT1; the interactions occur in endothelial cell (EC) under disturbed flow. Isoform 1 interacts with the oncoprotein FOS. Isoform 2 interacts with ATF6; the interaction occurs in a ER stress-dependent manner and is required for DNA binding to the unfolded protein response element (UPRE). Isoform 2 interacts with PIK3R1; the interaction is direct and induces translocation of XBP1 isoform 2 into the nucleus and the unfolded protein response (UPR) XBP1-dependent target genes activation in a ER stress- and/or insulin-dependent but PI3K-independent manner. Isoform 2 interacts with SIRT1. Isoform 2 interacts with PIK3R1 and PIK3R2; the interactions are direct and induce translocation of XBP1 isoform 2 into the nucleus and the unfolded protein response (UPR) XBP1-dependent target genes activation in a ER stress- and/or insulin-dependent but PI3K-independent manner. Isoform 2 interacts with FOXO1; the interaction is direct and leads to FOXO1 ubiquitination and degradation via the proteasome pathway in hepatocytes. In terms of processing, acetylated by EP300; acetylation positively regulates the transcriptional activity of XBP1 isoform 2. Isoform 2 is deacetylated by SIRT1; deacetylation negatively regulates the transcriptional activity of XBP1 isoform 2. Post-translationally, ubiquitinated, leading to proteasomal degradation in response to ER stress. X-box-binding protein 1, cytoplasmic form and luminal form are produced by intramembrane proteolytic cleavage of ER membrane-anchored isoform 1 triggered by HM13/SPP in a DERL1-RNF139-dependent and VCP/p97-independent manner. X-box-binding protein 1, luminal form is ubiquitinated leading to proteasomal degradation. Isoform 1 and isoform 2 are expressed at higher level in branch curves of vessel walls and in atherosclerotic plaques relative to healthy segments of the same aortas (at protein level). Expressed in skeletal muscles, plasma cells and pancreatic beta cells. Isoform 1 and isoform 2 are expressed in gonadal adipose tissue. Isoform 1 is expressed in inguinal adipose tissue.

The protein resides in the endoplasmic reticulum. It is found in the nucleus. The protein localises to the cytoplasm. Its subcellular location is the endoplasmic reticulum membrane. It localises to the membrane. In terms of biological role, functions as a transcription factor during endoplasmic reticulum stress by regulating the unfolded protein response (UPR). Required for cardiac myogenesis and hepatogenesis during embryonic development and the development of secretory tissues such as exocrine pancreas and salivary gland. Involved in differentiation of B lymphocytes to plasma cells and production of immunoglobulins. Modulates the cellular response to ER stress in a PIK3R-dependent manner. Binds to the cis-acting X box present in the promoter regions of major histocompatibility complex class II genes. Involved in VEGF-induced endothelial cell (EC) proliferation and retinal blood vessel formation during embryonic development but also for angiogenesis in adult tissues under ischemic conditions. Also functions as a major regulator of the UPR in obesity-induced insulin resistance and type 2 diabetes for the management of obesity and diabetes prevention. Its function is as follows. Plays a role in the unconventional cytoplasmic splicing processing of its own mRNA triggered by the endoplasmic reticulum (ER) transmembrane endoribonuclease ERN1: upon ER stress, the emerging XBP1 polypeptide chain, as part of a mRNA-ribosome-nascent chain (R-RNC) complex, cotranslationally recruits its own unprocessed mRNA through transient docking to the ER membrane and translational pausing, therefore facilitating efficient IRE1-mediated XBP1 mRNA isoform 2 production. In endothelial cells (EC), associated with KDR, promotes IRE1-mediated XBP1 mRNA isoform 2 production in a vascular endothelial growth factor (VEGF)-dependent manner, leading to EC proliferation and angiogenesis. Functions as a negative feed-back regulator of the potent transcription factor XBP1 isoform 2 protein levels through proteasome-mediated degradation, thus preventing the constitutive activation of the ER stress response signaling pathway. Inhibits the transactivation activity of XBP1 isoform 2 in myeloma cells. Acts as a weak transcriptional factor. Together with HDAC3, contributes to the activation of NFE2L2-mediated HMOX1 transcription factor gene expression in a PI(3)K/mTORC2/Akt-dependent signaling pathway leading to EC survival under disturbed flow/oxidative stress. Binds to the ER stress response element (ERSE) upon ER stress. Binds to the consensus 5'-GATGACGTG[TG]N(3)[AT]T-3' sequence related to cAMP responsive element (CRE)-like sequences. Binds the Tax-responsive element (TRE) present in the long terminal repeat (LTR) of T-cell leukemia virus type 1 (HTLV-I) and to the TPA response elements (TRE). Associates preferentially to the HDAC3 gene promoter region in a static flow-dependent manner. Binds to the CDH5/VE-cadherin gene promoter region. Functions as a stress-inducible potent transcriptional activator during endoplasmic reticulum (ER) stress by inducing unfolded protein response (UPR) target genes via binding to the UPR element (UPRE). Up-regulates target genes encoding ER chaperones and ER-associated degradation (ERAD) components to enhance the capacity of productive folding and degradation mechanism, respectively, in order to maintain the homeostasis of the ER under ER stress. Plays a role in the production of immunoglobulins and interleukin-6 in the presence of stimuli required for plasma cell differentiation, and promotes as well membrane phospholipid biosynthesis necessary for ER expansion. Contributes to the VEGF-induced endothelial cell (EC) growth and proliferation in a Akt/GSK-dependent and/or -independent signaling pathway, respectively, leading to beta-catenin nuclear translocation and E2F2 gene expression. Promotes umbilical vein EC apoptosis and atherosclerotisis development in a caspase-dependent signaling pathway, and contributes to VEGF-induced EC proliferation and angiogenesis in adult tissues under ischemic conditions. Involved in the regulation of endostatin-induced autophagy in EC through BECN1 transcriptional activation. Plays a role as an oncogene by promoting tumor progression: stimulates zinc finger protein SNAI1 transcription to induce epithelial-to-mesenchymal (EMT) transition, cell migration and invasion of breast cancer cells. Involved in adipocyte differentiation by regulating lipogenic gene expression during lactation. Plays a role in the survival of both dopaminergic neurons of the substantia nigra pars compacta (SNpc), by maintaining protein homeostasis and of myeloma cells. Increases insulin sensitivity in the liver as a response to a high carbohydrate diet, resulting in improved glucose tolerance. Also improves glucose homeostasis in an ER stress- and/or insulin-independent manner through both binding and proteasome-induced degradation of the transcription factor FOXO1, hence resulting in suppression of gluconeogenic genes expression and in a reduction of blood glucose levels. Controls the induction of de novo fatty acid synthesis in hepatocytes by regulating the expression of a subset of lipogenic genes in an ER stress- and UPR-independent manner. Binds to the 5'-CCACG-3' motif in the PPARG promoter. Associates preferentially to the HDAC3 gene promoter region in a disturbed flow-dependent manner. Binds to the BECN1 gene promoter region. Binds to the CDH5/VE-cadherin gene promoter region. Binds to the ER stress response element (ERSE) upon ER stress. The chain is X-box-binding protein 1 from Mus musculus (Mouse).